Here is a 344-residue protein sequence, read N- to C-terminus: 1-acyl-sn-glycerol-3-phosphate acyltransferase BAT2, chloroplastic (344 aa).

A chloroplast-targeting transit peptide spans 1–49 (MDVASAPGVSSHPPYYSKPICSSQSSLIRIPINKGCCFARSSNLITSLH). A helical membrane pass occupies residues 113 to 133 (GICFCLVAGVSAIVLIVLMIT). The short motif at 188–193 (HQSFLD) is the HXXXXD motif element. The chain crosses the membrane as a helical span at residues 210 to 230 (TGIFVIPVIGWAMSMMGVVPL).

Belongs to the 1-acyl-sn-glycerol-3-phosphate acyltransferase family. In terms of tissue distribution, widely expressed.

It is found in the plastid. The protein localises to the chloroplast membrane. The catalysed reaction is a fatty acyl-[ACP] + a 1-acyl-sn-glycero-3-phosphate = a 1,2-diacyl-sn-glycero-3-phosphate + holo-[ACP]. It catalyses the reaction a 1-acyl-sn-glycero-3-phosphate + an acyl-CoA = a 1,2-diacyl-sn-glycero-3-phosphate + CoA. It functions in the pathway phospholipid metabolism; CDP-diacylglycerol biosynthesis; CDP-diacylglycerol from sn-glycerol 3-phosphate: step 2/3. In terms of biological role, plastidial enzyme of the prokaryotic glycerol-3-phosphate pathway that converts lysophosphatidic acid (LPA) into phosphatidic acid by incorporating an acyl moiety at position sn-2. Utilizes palmitoyl-ACP (16:0-ACP) to produce phosphatidic acid containing a saturated group at position sn-2, which is characteristic of lipids synthesized by the prokaryotic pathway. In vitro, can use 16:0-CoA as acyl donor. This chain is 1-acyl-sn-glycerol-3-phosphate acyltransferase BAT2, chloroplastic, found in Brassica napus (Rape).